We begin with the raw amino-acid sequence, 292 residues long: Diaminopimelate epimerase (292 aa).

Substrate-binding residues include asparagine 13, glutamine 46, and asparagine 66. The active-site Proton donor is cysteine 75. Substrate-binding positions include 76–77 (GN), asparagine 166, asparagine 199, and 217–218 (ER). Cysteine 226 (proton acceptor) is an active-site residue. Substrate is bound at residue 227–228 (GT).

The protein belongs to the diaminopimelate epimerase family. Homodimer.

The protein localises to the cytoplasm. The catalysed reaction is (2S,6S)-2,6-diaminopimelate = meso-2,6-diaminopimelate. It participates in amino-acid biosynthesis; L-lysine biosynthesis via DAP pathway; DL-2,6-diaminopimelate from LL-2,6-diaminopimelate: step 1/1. In terms of biological role, catalyzes the stereoinversion of LL-2,6-diaminopimelate (L,L-DAP) to meso-diaminopimelate (meso-DAP), a precursor of L-lysine and an essential component of the bacterial peptidoglycan. This is Diaminopimelate epimerase from Ralstonia nicotianae (strain ATCC BAA-1114 / GMI1000) (Ralstonia solanacearum).